Here is a 162-residue protein sequence, read N- to C-terminus: Putative pre-16S rRNA nuclease (162 aa).

The protein belongs to the YqgF nuclease family.

The protein resides in the cytoplasm. Could be a nuclease involved in processing of the 5'-end of pre-16S rRNA. This Brucella abortus (strain S19) protein is Putative pre-16S rRNA nuclease.